A 145-amino-acid polypeptide reads, in one-letter code: Transcription antitermination protein NusB (145 aa).

It belongs to the NusB family.

Functionally, involved in transcription antitermination. Required for transcription of ribosomal RNA (rRNA) genes. Binds specifically to the boxA antiterminator sequence of the ribosomal RNA (rrn) operons. The sequence is that of Transcription antitermination protein NusB from Geotalea daltonii (strain DSM 22248 / JCM 15807 / FRC-32) (Geobacter daltonii).